The sequence spans 220 residues: Charged multivesicular body protein 2a (220 aa).

2 coiled-coil regions span residues 12–53 and 198–219; these read EELL…MAKQ and EATAALADADADLEERLNNLRR. The interval 196–220 is disordered; it reads KGEATAALADADADLEERLNNLRRD. Residues 208-218 carry the MIT-interacting motif motif; sequence ADLEERLNNLR. Basic and acidic residues predominate over residues 211-220; the sequence is EERLNNLRRD.

The protein belongs to the SNF7 family. In terms of assembly, probable core component of the endosomal sorting required for transport complex III (ESCRT-III). ESCRT-III components are thought to multimerize to form a flat lattice on the perimeter membrane of the endosome.

Its subcellular location is the late endosome membrane. The protein localises to the cytoplasm. In terms of biological role, probable core component of the endosomal sorting required for transport complex III (ESCRT-III) which is involved in multivesicular bodies (MVBs) formation and sorting of endosomal cargo proteins into MVBs. MVBs contain intraluminal vesicles (ILVs) that are generated by invagination and scission from the limiting membrane of the endosome and mostly are delivered to lysosomes enabling degradation of membrane proteins, such as stimulated growth factor receptors, lysosomal enzymes and lipids. In Xenopus laevis (African clawed frog), this protein is Charged multivesicular body protein 2a (chmp2a).